The chain runs to 246 residues: Deoxycytidylate 5-hydroxymethyltransferase (246 aa).

Residue Cys-148 is part of the active site.

This sequence belongs to the thymidylate synthase family.

It carries out the reaction dCMP + (6R)-5,10-methylene-5,6,7,8-tetrahydrofolate + H2O = 5-hydroxymethyl-dCMP + (6S)-5,6,7,8-tetrahydrofolate. In Escherichia coli (Bacteriophage T2), this protein is Deoxycytidylate 5-hydroxymethyltransferase (42).